The primary structure comprises 535 residues: Nuclear/nucleolar GTPase 2 (535 aa).

Residues methionine 1–serine 42 form a disordered region. The segment covering histidine 17–glycine 29 has biased composition (basic and acidic residues). The span at alanine 30–arginine 41 shows a compositional bias: gly residues. The region spanning tryptophan 213–glutamine 374 is the CP-type G domain. A G4 region spans residues asparagine 261 to aspartate 264. The tract at residues serine 290–asparagine 292 is G5. Residues glycine 323–serine 330 are G1. Residues glycine 349–valine 353 form a G2 region. The segment at aspartate 367–glycine 370 is G3. Residues phenylalanine 464–arginine 495 are disordered.

This sequence belongs to the TRAFAC class YlqF/YawG GTPase family. RsgA subfamily.

It localises to the nucleus. The protein localises to the nucleolus. GTPase involved in pre-60S ribosomal subunit maturation. This is Nuclear/nucleolar GTPase 2 from Oryza sativa subsp. indica (Rice).